Consider the following 199-residue polypeptide: Protein-methionine-sulfoxide reductase heme-binding subunit MsrQ (199 aa).

5 helical membrane passes run 8–28, 82–102, 116–136, 149–169, and 171–191; these read ITWL…WLFW, LWCF…ELGI, PYLT…LTST, FLHN…LWSV, and ILSP…AWRY.

The protein belongs to the MsrQ family. As to quaternary structure, heterodimer of a catalytic subunit (MsrP) and a heme-binding subunit (MsrQ). It depends on FMN as a cofactor. Heme b serves as cofactor.

It is found in the cell inner membrane. Functionally, part of the MsrPQ system that repairs oxidized periplasmic proteins containing methionine sulfoxide residues (Met-O), using respiratory chain electrons. Thus protects these proteins from oxidative-stress damage caused by reactive species of oxygen and chlorine generated by the host defense mechanisms. MsrPQ is essential for the maintenance of envelope integrity under bleach stress, rescuing a wide series of structurally unrelated periplasmic proteins from methionine oxidation. MsrQ provides electrons for reduction to the reductase catalytic subunit MsrP, using the quinone pool of the respiratory chain. This Enterobacter sp. (strain 638) protein is Protein-methionine-sulfoxide reductase heme-binding subunit MsrQ.